The following is a 724-amino-acid chain: Eukaryotic elongation factor 2 kinase (724 aa).

An N-acetylalanine modification is found at alanine 2. A Phosphoserine modification is found at serine 27. At serine 61 the chain carries Phosphoserine; by autocatalysis. A phosphoserine mark is found at serine 70, serine 73, and serine 77. The segment at 80–93 (FKEAWKHAIEKAKH) is calmodulin-binding. Positions 115–325 (RYNAVTGEWL…ICQSMGLTPF (211 aa)) constitute an Alpha-type protein kinase domain. The residue at position 242 (serine 242) is a Phosphoserine. 295 to 301 (GDGNLGV) serves as a coordination point for ATP. 2 positions are modified to phosphothreonine; by autocatalysis: threonine 347 and threonine 352. A disordered region spans residues 353–476 (EEKCGSPRIR…HESDEDSLGS (124 aa)). Serine 358 is modified (phosphoserine; by MAPK13 and CDK1). Positions 358–376 (SPRIRTLSSSRPPLLLRLS) are enriched in low complexity. Serine 365 is subject to Phosphoserine; by autocatalysis, RPS6KA1 and RPS6KB1. Residues 385–403 (SDVTFDSLPSSPSSATPHS) show a composition bias toward polar residues. The residue at position 391 (serine 391) is a Phosphoserine. At serine 397 the chain carries Phosphoserine; by AMPK. Composition is skewed to basic and acidic residues over residues 421–435 (GPRD…RDSE) and 444–469 (SEKR…RHES). A phosphoserine mark is found at serine 434, serine 444, and serine 469. Position 473 is a phosphoserine; by autocatalysis (serine 473). Phosphoserine is present on serine 476. Serine 499 carries the post-translational modification Phosphoserine; by PKA.

Belongs to the protein kinase superfamily. Alpha-type protein kinase family. Monomer or homodimer. Interacts with Calmodulin/CALM1; this interaction is strictly required for phosphorylation activity. Autophosphorylated at multiple residues, Thr-347 being the major site. Phosphorylated by AMP-activated protein kinase AMPK at Ser-397 leading to EEF2K activation and protein synthesis inhibition. Phosphorylated by TRPM7 at Ser-77 resulting in improved protein stability, higher EE2F phosphorylated and subsequently reduced rate of protein synthesis. Phosphorylation by other kinases such as CDK1 and MAPK13 at Ser-358 or RPS6KA1 and RPS6KB1 at Ser-365 instead decrease EEF2K activity and promote protein synthesis. Ubiquitously expressed. Particularly abundant in skeletal muscle and heart.

The enzyme catalyses [translation elongation factor 2] + ATP = [translation elongation factor 2]-phosphate + ADP + H(+). With respect to regulation, undergoes calcium/calmodulin-dependent intramolecular autophosphorylation, and this results in it becoming partially calcium/calmodulin-independent. Threonine kinase that regulates protein synthesis by controlling the rate of peptide chain elongation. Upon activation by a variety of upstream kinases including AMPK or TRPM7, phosphorylates the elongation factor EEF2 at a single site, renders it unable to bind ribosomes and thus inactive. In turn, the rate of protein synthesis is reduced. The polypeptide is Eukaryotic elongation factor 2 kinase (Eef2k) (Mus musculus (Mouse)).